The primary structure comprises 539 residues: Chaperonin GroEL 1 (539 aa).

ATP is bound by residues 29–32 (TLGP), 86–90 (DGTTT), glycine 413, 478–480 (NAA), and aspartate 494. The interval 520–539 (IVDKPAEPEDDGHGHHGHAH) is disordered. Positions 523–533 (KPAEPEDDGHG) are enriched in basic and acidic residues.

It belongs to the chaperonin (HSP60) family. Forms a cylinder of 14 subunits composed of two heptameric rings stacked back-to-back. Interacts with the co-chaperonin GroES.

The protein localises to the cytoplasm. It catalyses the reaction ATP + H2O + a folded polypeptide = ADP + phosphate + an unfolded polypeptide.. Its function is as follows. Together with its co-chaperonin GroES, plays an essential role in assisting protein folding. The GroEL-GroES system forms a nano-cage that allows encapsulation of the non-native substrate proteins and provides a physical environment optimized to promote and accelerate protein folding. The sequence is that of Chaperonin GroEL 1 from Mycobacterium ulcerans (strain Agy99).